The following is a 270-amino-acid chain: Undecaprenyl-diphosphatase (270 aa).

7 helical membrane-spanning segments follow: residues 3 to 23 (TIVTAILLGIVEGLTEFLPVS), 42 to 62 (WAMFNVVIQLGAILAVVVQYW), 86 to 106 (LLAAFIPSAILGLALKKYIDV), 108 to 128 (LGSPSVVCWALIAGGIAILVI), 184 to 204 (AEFSFFLAIPTMLGATTLELL), 217 to 237 (VGWSEIGVGFAVSFVVALAVI), and 249 to 269 (FKPFAWYRIAAGAVALGWLAM).

The protein belongs to the UppP family.

It is found in the cell inner membrane. It carries out the reaction di-trans,octa-cis-undecaprenyl diphosphate + H2O = di-trans,octa-cis-undecaprenyl phosphate + phosphate + H(+). In terms of biological role, catalyzes the dephosphorylation of undecaprenyl diphosphate (UPP). Confers resistance to bacitracin. The protein is Undecaprenyl-diphosphatase of Novosphingobium aromaticivorans (strain ATCC 700278 / DSM 12444 / CCUG 56034 / CIP 105152 / NBRC 16084 / F199).